A 206-amino-acid polypeptide reads, in one-letter code: MARKKQSGGRKVEGWKAKNWYKVHAPEFLGKQFIGEIISSNPENVPGRVLTVSLGELIQDYSKQNVRASFKIMNVAGDAAYTQFNGHEMTKEFVRAMVKKRASRVDSTITVTPLGSTRELQVTITAFTINHARLSQVQELRAKMVKVVEDSAKEADFESFVSAMLKGELSKKMFAECKPIFPVRRIEIIKSESVSSAADRAAALIR.

The protein belongs to the eukaryotic ribosomal protein eS1 family.

The protein is Small ribosomal subunit protein eS1 of Methanocorpusculum labreanum (strain ATCC 43576 / DSM 4855 / Z).